Reading from the N-terminus, the 260-residue chain is Imidazole glycerol phosphate synthase subunit HisF (260 aa).

Active-site residues include Asp11 and Asp130.

Belongs to the HisA/HisF family. Heterodimer of HisH and HisF.

Its subcellular location is the cytoplasm. It carries out the reaction 5-[(5-phospho-1-deoxy-D-ribulos-1-ylimino)methylamino]-1-(5-phospho-beta-D-ribosyl)imidazole-4-carboxamide + L-glutamine = D-erythro-1-(imidazol-4-yl)glycerol 3-phosphate + 5-amino-1-(5-phospho-beta-D-ribosyl)imidazole-4-carboxamide + L-glutamate + H(+). The protein operates within amino-acid biosynthesis; L-histidine biosynthesis; L-histidine from 5-phospho-alpha-D-ribose 1-diphosphate: step 5/9. Functionally, IGPS catalyzes the conversion of PRFAR and glutamine to IGP, AICAR and glutamate. The HisF subunit catalyzes the cyclization activity that produces IGP and AICAR from PRFAR using the ammonia provided by the HisH subunit. This chain is Imidazole glycerol phosphate synthase subunit HisF, found in Desulfatibacillum aliphaticivorans.